The chain runs to 416 residues: Serine hydroxymethyltransferase (416 aa).

(6S)-5,6,7,8-tetrahydrofolate contacts are provided by residues L121 and 125 to 127 (GHL). K230 carries the N6-(pyridoxal phosphate)lysine modification.

It belongs to the SHMT family. Homodimer. The cofactor is pyridoxal 5'-phosphate.

The protein resides in the cytoplasm. It catalyses the reaction (6R)-5,10-methylene-5,6,7,8-tetrahydrofolate + glycine + H2O = (6S)-5,6,7,8-tetrahydrofolate + L-serine. It participates in one-carbon metabolism; tetrahydrofolate interconversion. Its pathway is amino-acid biosynthesis; glycine biosynthesis; glycine from L-serine: step 1/1. Catalyzes the reversible interconversion of serine and glycine with tetrahydrofolate (THF) serving as the one-carbon carrier. This reaction serves as the major source of one-carbon groups required for the biosynthesis of purines, thymidylate, methionine, and other important biomolecules. Also exhibits THF-independent aldolase activity toward beta-hydroxyamino acids, producing glycine and aldehydes, via a retro-aldol mechanism. This chain is Serine hydroxymethyltransferase, found in Nitrosomonas europaea (strain ATCC 19718 / CIP 103999 / KCTC 2705 / NBRC 14298).